The following is a 344-amino-acid chain: 4-hydroxy-2-oxovalerate aldolase (344 aa).

A Pyruvate carboxyltransferase domain is found at valine 8 to methionine 260. Arginine 16–aspartate 17 is a substrate binding site. Aspartate 17 is a Mn(2+) binding site. Catalysis depends on histidine 20, which acts as the Proton acceptor. Positions 170 and 199 each coordinate substrate. Positions 199 and 201 each coordinate Mn(2+). Tyrosine 290 contacts substrate.

Belongs to the 4-hydroxy-2-oxovalerate aldolase family.

The catalysed reaction is (S)-4-hydroxy-2-oxopentanoate = acetaldehyde + pyruvate. The chain is 4-hydroxy-2-oxovalerate aldolase (mhpE) from Pseudoalteromonas translucida (strain TAC 125).